A 251-amino-acid polypeptide reads, in one-letter code: SNAP25 homologous protein SNAP29 (251 aa).

Residues 1–52 (MAPKNSSWNPFDDEKEAAKSFSLNPFDDDDDDKEVEKRFTSSLKPSGGKENQ) form a disordered region. Residues 40 to 52 (TSSLKPSGGKENQ) are compositionally biased toward polar residues. One can recognise a t-SNARE coiled-coil homology domain in the interval 186 to 248 (KTQIAKQDEA…KQSNQRARYL (63 aa)).

This sequence belongs to the SNAP-25 family.

It localises to the membrane. The protein localises to the cytoplasm. In terms of biological role, SNAREs, soluble N-ethylmaleimide-sensitive factor-attachment protein receptors, are essential proteins for fusion of cellular membranes. SNAREs localized on opposing membranes assemble to form a trans-SNARE complex, an extended, parallel four alpha-helical bundle that drives membrane fusion. This is SNAP25 homologous protein SNAP29 (SNAP29) from Arabidopsis thaliana (Mouse-ear cress).